We begin with the raw amino-acid sequence, 257 residues long: Small ribosomal subunit protein uS2 (257 aa).

It belongs to the universal ribosomal protein uS2 family.

This Ruegeria pomeroyi (strain ATCC 700808 / DSM 15171 / DSS-3) (Silicibacter pomeroyi) protein is Small ribosomal subunit protein uS2.